We begin with the raw amino-acid sequence, 204 residues long: E3 ubiquitin-protein ligase MPSR1 (204 aa).

Residues 113–154 (CVICLEEWKSEETVKEMPCKHRFHGGCIEKWLGFHGSCPVCR) form an RING-type; atypical zinc finger.

Post-translationally, autoubiquitinated.

The protein localises to the cytoplasm. The catalysed reaction is S-ubiquitinyl-[E2 ubiquitin-conjugating enzyme]-L-cysteine + [acceptor protein]-L-lysine = [E2 ubiquitin-conjugating enzyme]-L-cysteine + N(6)-ubiquitinyl-[acceptor protein]-L-lysine.. E3 ubiquitin-protein ligase involved in protein quality control (PQC) under proteotoxic stress. Is essential to plant survival under proteotoxic stress. Functions by removing damaged proteins before they form cytotoxic aggregates. Recognizes misfolded proteins selectively and tethers polyubiquitin chains to the proteins directly for subsequent degradation by the 26S proteasome pathway. Targets misfolded proteins independently of cytoplasmic chaperones. Associates with the 26S proteasome and sustains the structural integrity of the proteasome complex at the initial stage of proteotoxic stress. Under normal conditions, MPSR1 becomes highly unstable by its autoubiquitination activity and is stabilized during proteotoxic stress by conjugating ubiquitins on misfolded proteins. The polypeptide is E3 ubiquitin-protein ligase MPSR1 (Arabidopsis thaliana (Mouse-ear cress)).